Consider the following 354-residue polypeptide: Malate dehydrogenase 1, peroxisomal (354 aa).

A peroxisomal targeting signal PTS2 region spans residues R6–L14. NAD(+)-binding positions include G49–G55 and D75. Positions 122 and 128 each coordinate substrate. NAD(+) is bound by residues N135 and I158–N160. Positions 160 and 194 each coordinate substrate. H218 (proton acceptor) is an active-site residue. M269 contacts NAD(+).

This sequence belongs to the LDH/MDH superfamily. MDH type 1 family. In terms of assembly, homodimer. In terms of tissue distribution, expressed in rosette leaves at low levels.

It is found in the peroxisome. The enzyme catalyses (S)-malate + NAD(+) = oxaloacetate + NADH + H(+). In terms of biological role, catalyzes a reversible NAD-dependent dehydrogenase reaction involved in central metabolism and redox homeostasis between organelle compartments. Peroxisomal NAD-dependent malate dehydrogenase involved in fatty acid beta-oxidation. Reoxidizes NADH from the beta-oxidation and provides NAD for the conversion of fatty acyl-CoA to acetyl-CoA. Does not participate directly in the glyoxylate cycle. Required for maintenance of photosynthetic rates under photorespiratory conditions, and carbon flow during photorespiration. Supplies NADH reductant to the peroxisomal hydroxypyruvate reductase (HPR), which reduces hydroxypyruvate into glycerate in the photorespiratory cycle. This Arabidopsis thaliana (Mouse-ear cress) protein is Malate dehydrogenase 1, peroxisomal.